Reading from the N-terminus, the 353-residue chain is MDLQTSLLSTGPNASNISDGQDNLTLPGSPPRTGSVSYINIIMPSVFGTICLLGIVGNSTVIFAVVKKSKLHWCSNVPDIFIINLSVVDLLFLLGMPFMIHQLMGNGVWHFGETMCTLITAMDANSQFTSTYILTAMTIDRYLATVHPISSTKFRKPSMATLVICLLWALSFISITPVWLYARLIPFPGGAVGCGIRLPNPDTDLYWFTLYQFFLAFALPFVVITAAYVKILQRMTSSVAPASQRSIRLRTKRVTRTAIAICLVFFVCWAPYYVLQLTQLSISRPTLTFVYLYNAAISLGYANSCLNPFVYIVLCETFRKRLVLSVKPAAQGQLRTVSNAQTADEERTESKGT.

A disordered region spans residues 1 to 26 (MDLQTSLLSTGPNASNISDGQDNLTL). Residues 1–45 (MDLQTSLLSTGPNASNISDGQDNLTLPGSPPRTGSVSYINIIMPS) lie on the Extracellular side of the membrane. 3 N-linked (GlcNAc...) asparagine glycosylation sites follow: asparagine 13, asparagine 16, and asparagine 23. A helical membrane pass occupies residues 46-66 (VFGTICLLGIVGNSTVIFAVV). The Cytoplasmic portion of the chain corresponds to 67-79 (KKSKLHWCSNVPD). The helical transmembrane segment at 80-100 (IFIINLSVVDLLFLLGMPFMI) threads the bilayer. At 101–116 (HQLMGNGVWHFGETMC) the chain is on the extracellular side. Cysteine 116 and cysteine 194 form a disulfide bridge. Residues 117–139 (TLITAMDANSQFTSTYILTAMTI) form a helical membrane-spanning segment. Residues 140 to 161 (DRYLATVHPISSTKFRKPSMAT) lie on the Cytoplasmic side of the membrane. The chain crosses the membrane as a helical span at residues 162 to 182 (LVICLLWALSFISITPVWLYA). Topologically, residues 183–204 (RLIPFPGGAVGCGIRLPNPDTD) are extracellular. Residues 205–225 (LYWFTLYQFFLAFALPFVVIT) form a helical membrane-spanning segment. At 226–256 (AAYVKILQRMTSSVAPASQRSIRLRTKRVTR) the chain is on the cytoplasmic side. Residues 257–277 (TAIAICLVFFVCWAPYYVLQL) traverse the membrane as a helical segment. Topologically, residues 278 to 294 (TQLSISRPTLTFVYLYN) are extracellular. The chain crosses the membrane as a helical span at residues 295 to 315 (AAISLGYANSCLNPFVYIVLC). Over 316–353 (ETFRKRLVLSVKPAAQGQLRTVSNAQTADEERTESKGT) the chain is Cytoplasmic.

This sequence belongs to the G-protein coupled receptor 1 family. In terms of assembly, interacts with NCDN. In terms of tissue distribution, high level in the brain, moderate amounts in the eye and skeletal muscle, and small amounts in tongue and pituitary.

The protein resides in the cell membrane. In terms of biological role, receptor for melanin-concentrating hormone, coupled to G proteins that inhibit adenylyl cyclase. The chain is Melanin-concentrating hormone receptor 1 from Rattus norvegicus (Rat).